Here is a 200-residue protein sequence, read N- to C-terminus: Sec-independent protein translocase protein TatB (200 aa).

The chain crosses the membrane as a helical span at residues 2–22 (LPDIGGTELLIIAAVALIVVG). A disordered region spans residues 160-200 (KAPRKRASQKQEITVEAPKAVRAPRKRASKAGDSTASDIVS). A compositionally biased stretch (polar residues) spans 191-200 (GDSTASDIVS).

The protein belongs to the TatB family. As to quaternary structure, the Tat system comprises two distinct complexes: a TatABC complex, containing multiple copies of TatA, TatB and TatC subunits, and a separate TatA complex, containing only TatA subunits. Substrates initially bind to the TatABC complex, which probably triggers association of the separate TatA complex to form the active translocon.

The protein localises to the cell inner membrane. Part of the twin-arginine translocation (Tat) system that transports large folded proteins containing a characteristic twin-arginine motif in their signal peptide across membranes. Together with TatC, TatB is part of a receptor directly interacting with Tat signal peptides. TatB may form an oligomeric binding site that transiently accommodates folded Tat precursor proteins before their translocation. The chain is Sec-independent protein translocase protein TatB from Caulobacter vibrioides (strain ATCC 19089 / CIP 103742 / CB 15) (Caulobacter crescentus).